Consider the following 552-residue polypeptide: MTGFARFAELCERISQTSGSLEKTDILASFLSDLESDDLRIVAGFVMGVVIPGTELGVGPSLLYESISRATGLSSDAVNELLRATGDPGLVAYRAVERRKPLTLAAFSGSEGLEVQDVYQRFLSIAKASGRGSQEIRVKNLQYMFSEASPLEAKYIARLAMEDMRIGVGEGLVRDAIAKAFGVSKEDVERAYNLTNDLGLVAEYAKLGRLNELGISINRPIKMMLAQIGESIEASLAEGATAVEWKFDGARVQIHKDKGNVRIFSRRLEDVTSSLPEIREIVRGHVRARTAILDGEAVATGEDGRPLPFQEILRRFRRKYGVARTAKTIPLKLHLFDIIYMDGASLLDEPLEERRRVLVSVADPEIIAEQVVTSDVHRVEEIYREALAAGHEGVMLKNPSSTYTPGKRGKNWLKIKPLLESLDLVVIGARWGEGKRANLLGSYRLACIDTDTGELKDVGWVATGITDEMLAELTELFRELIVKENGMEVEVHPEIVFEVGYEEIQRSPNYSSGYALRFPRLIAVRDDKSPSEADTLERIGEIYRLQRGRSKK.

Glu244 is an ATP binding site. The active-site N6-AMP-lysine intermediate is the Lys246. ATP contacts are provided by Arg251, Arg266, Glu296, Phe336, Arg408, and Lys414.

Belongs to the ATP-dependent DNA ligase family. The cofactor is Mg(2+).

The enzyme catalyses ATP + (deoxyribonucleotide)n-3'-hydroxyl + 5'-phospho-(deoxyribonucleotide)m = (deoxyribonucleotide)n+m + AMP + diphosphate.. DNA ligase that seals nicks in double-stranded DNA during DNA replication, DNA recombination and DNA repair. The polypeptide is DNA ligase (Methanothrix thermoacetophila (strain DSM 6194 / JCM 14653 / NBRC 101360 / PT) (Methanosaeta thermophila)).